The sequence spans 1603 residues: Protein TIC 214 (1603 aa).

A run of 6 helical transmembrane segments spans residues 11 to 31, 58 to 78, 86 to 106, 131 to 151, 167 to 187, and 213 to 233; these read VLWASILSWINISSPLILFGL, LSGTVAVSGLILGQLIIFLSI, LLLKPHTVTLLVLPYLLFYWY, IFFDSFIFQLLNPVLLPSPIL, LFVLSCFFGWLSGHLFFFNCI, and FSIFVLACILLYLGRAPVPFF.

It belongs to the TIC214 family. As to quaternary structure, part of the Tic complex.

It localises to the plastid. The protein localises to the chloroplast inner membrane. Functionally, involved in protein precursor import into chloroplasts. May be part of an intermediate translocation complex acting as a protein-conducting channel at the inner envelope. The chain is Protein TIC 214 from Physcomitrium patens (Spreading-leaved earth moss).